Consider the following 306-residue polypeptide: MSTLGHQYDNSLVSNAFGFLRLPMNFQPYDSDADWVITGVPFDMATSGRAGGRHGPAAIRQVSTNLAWEHNRFPWNFDMRERLNVVDCGDLVYAFGDAREMSEKLQAHAEKLLAAGKRMLSFGGDHFVTLPLLRAHAKHFGKMALVHFDAHTDTYANGCEFDHGTMFYTAPNEGLIDPNHSVQIGIRTEFDKDNGFTVLDAGQVNDRGVDDIIAQVKQIVGDMPVYLTFDIDCLDPAFAPGTGTPVIGGLTSDRAIKLVRGLKDLNIVGMDVVEVAPAYDQSEITALAAATLALEMLYIQAAKKGE.

6 residues coordinate Mn(2+): H126, D149, H151, D153, D230, and D232.

Belongs to the arginase family. Agmatinase subfamily. Mn(2+) is required as a cofactor.

It catalyses the reaction agmatine + H2O = urea + putrescine. The protein operates within amine and polyamine biosynthesis; putrescine biosynthesis via agmatine pathway; putrescine from agmatine: step 1/1. Its function is as follows. Catalyzes the formation of putrescine from agmatine. The chain is Agmatinase from Enterobacter sp. (strain 638).